Here is a 603-residue protein sequence, read N- to C-terminus: NADH-ubiquinone oxidoreductase chain 5 (603 aa).

The next 16 helical transmembrane spans lie at 4 to 24 (YTTM…TTLI), 38 to 58 (SIIA…MCLD), 87 to 107 (MTFI…SLWY), 122 to 142 (LIFL…QLFI), 144 to 160 (WEGV…WWYA), 171 to 191 (AILY…WFLL), 211 to 233 (TPLL…HPWL), 241 to 261 (TPVS…FLLI), 272 to 292 (LIQT…AICA), 301 to 320 (IVAF…IGIN), 325 to 347 (AFLH…GSII), 370 to 390 (STSL…TGFY), 407 to 429 (WALS…MILL), 457 to 477 (LTIG…PMST), 482 to 502 (IPLY…LTAL), and 583 to 603 (MIKL…LLIM).

Belongs to the complex I subunit 5 family. In terms of assembly, core subunit of respiratory chain NADH dehydrogenase (Complex I) which is composed of 45 different subunits.

It is found in the mitochondrion inner membrane. The catalysed reaction is a ubiquinone + NADH + 5 H(+)(in) = a ubiquinol + NAD(+) + 4 H(+)(out). In terms of biological role, core subunit of the mitochondrial membrane respiratory chain NADH dehydrogenase (Complex I) which catalyzes electron transfer from NADH through the respiratory chain, using ubiquinone as an electron acceptor. Essential for the catalytic activity and assembly of complex I. The protein is NADH-ubiquinone oxidoreductase chain 5 (MT-ND5) of Pan paniscus (Pygmy chimpanzee).